Consider the following 238-residue polypeptide: Uroporphyrinogen-III C-methyltransferase (238 aa).

S-adenosyl-L-homocysteine-binding positions include proline 11, 87–89 (GGD), 117–118 (TS), and methionine 170.

The protein belongs to the precorrin methyltransferase family. As to quaternary structure, monomer.

It carries out the reaction uroporphyrinogen III + 2 S-adenosyl-L-methionine = precorrin-2 + 2 S-adenosyl-L-homocysteine + H(+). It functions in the pathway cofactor biosynthesis; adenosylcobalamin biosynthesis; precorrin-2 from uroporphyrinogen III: step 1/1. Its pathway is porphyrin-containing compound metabolism; siroheme biosynthesis; precorrin-2 from uroporphyrinogen III: step 1/1. SUMT exhibits a substrate inhibition phenomenon at uroporphyrinogen III concentrations above 0.5 uM; this property might play a regulatory role in cobalamin biosynthesis. Functionally, catalyzes the two successive C-2 and C-7 methylation reactions involved in the conversion of uroporphyrinogen III to precorrin-2 via the intermediate formation of precorrin-1. It is a step in the biosynthesis of both cobalamin (vitamin B12) and siroheme. This chain is Uroporphyrinogen-III C-methyltransferase, found in Priestia megaterium (Bacillus megaterium).